The sequence spans 224 residues: Ribose-5-phosphate isomerase A (224 aa).

Residues 26–29 (TGST), 81–84 (DGAD), and 94–97 (KGGG) each bind substrate. Residue glutamate 103 is the Proton acceptor of the active site. Lysine 121 serves as a coordination point for substrate.

It belongs to the ribose 5-phosphate isomerase family. In terms of assembly, homodimer.

It carries out the reaction aldehydo-D-ribose 5-phosphate = D-ribulose 5-phosphate. The protein operates within carbohydrate degradation; pentose phosphate pathway; D-ribose 5-phosphate from D-ribulose 5-phosphate (non-oxidative stage): step 1/1. Catalyzes the reversible conversion of ribose-5-phosphate to ribulose 5-phosphate. The polypeptide is Ribose-5-phosphate isomerase A (Listeria monocytogenes serotype 4b (strain F2365)).